The primary structure comprises 121 residues: Small ribosomal subunit protein uS13 (121 aa).

Residues 91-121 form a disordered region; it reads HRKGLPMRGQRTRTNARTRKGPRKAGVALKK.

Belongs to the universal ribosomal protein uS13 family. As to quaternary structure, part of the 30S ribosomal subunit. Forms a loose heterodimer with protein S19. Forms two bridges to the 50S subunit in the 70S ribosome.

Located at the top of the head of the 30S subunit, it contacts several helices of the 16S rRNA. In the 70S ribosome it contacts the 23S rRNA (bridge B1a) and protein L5 of the 50S subunit (bridge B1b), connecting the 2 subunits; these bridges are implicated in subunit movement. Contacts the tRNAs in the A and P-sites. The sequence is that of Small ribosomal subunit protein uS13 from Cupriavidus taiwanensis (strain DSM 17343 / BCRC 17206 / CCUG 44338 / CIP 107171 / LMG 19424 / R1) (Ralstonia taiwanensis (strain LMG 19424)).